Consider the following 132-residue polypeptide: CLAVATA3/ESR (CLE)-related protein ESR2 (132 aa).

An N-terminal signal peptide occupies residues 1–26 (MASRMGMVAIVSLFVCALVASTSVNA). Positions 68 to 132 (NRASKQLDSE…IGPPPFLDRY (65 aa)) are disordered. Hydroxyproline is present on residues Pro-82 and Pro-85. The O-linked (Ara...) hydroxyproline glycan is linked to Pro-85. The span at 123–132 (IGPPPFLDRY) shows a compositional bias: pro residues.

The protein belongs to the CLV3/ESR signal peptide family. In terms of processing, the O-glycosylation (arabinosylation) of the hydroxyproline Pro-85 enhances binding affinity of the ESR2p peptide for its receptor. In terms of tissue distribution, seed endosperm.

It localises to the secreted. The protein localises to the extracellular space. In terms of biological role, extracellular signal peptide that regulates cell fate. This chain is CLAVATA3/ESR (CLE)-related protein ESR2, found in Zea mays (Maize).